The chain runs to 512 residues: D-alanine--D-alanyl carrier protein ligase (512 aa).

152 to 153 (TS) serves as a coordination point for ATP. Aspartate 199 contacts D-alanine. ATP is bound at residue 294–299 (NAYGPT). A D-alanine-binding site is contributed by valine 303. ATP is bound by residues aspartate 385, 397–400 (YGGR), and lysine 499. Lysine 499 lines the D-alanine pocket.

It belongs to the ATP-dependent AMP-binding enzyme family. DltA subfamily.

It is found in the cytoplasm. The enzyme catalyses holo-[D-alanyl-carrier protein] + D-alanine + ATP = D-alanyl-[D-alanyl-carrier protein] + AMP + diphosphate. Its pathway is cell wall biogenesis; lipoteichoic acid biosynthesis. Functionally, catalyzes the first step in the D-alanylation of lipoteichoic acid (LTA), the activation of D-alanine and its transfer onto the D-alanyl carrier protein (Dcp) DltC. In an ATP-dependent two-step reaction, forms a high energy D-alanyl-AMP intermediate, followed by transfer of the D-alanyl residue as a thiol ester to the phosphopantheinyl prosthetic group of the Dcp. D-alanylation of LTA plays an important role in modulating the properties of the cell wall in Gram-positive bacteria, influencing the net charge of the cell wall. This Streptococcus equi subsp. equi (strain 4047) protein is D-alanine--D-alanyl carrier protein ligase.